We begin with the raw amino-acid sequence, 865 residues long: Protein translocase subunit SecA (865 aa).

Residues Gln-85, 103 to 107 (GEGKT), and Asp-505 each bind ATP. Zn(2+) contacts are provided by Cys-847, Cys-849, Cys-858, and His-859.

The protein belongs to the SecA family. In terms of assembly, monomer and homodimer. Part of the essential Sec protein translocation apparatus which comprises SecA, SecYEG and auxiliary proteins SecDF. Other proteins may also be involved. The cofactor is Zn(2+).

The protein resides in the cell membrane. The protein localises to the cytoplasm. The enzyme catalyses ATP + H2O + cellular proteinSide 1 = ADP + phosphate + cellular proteinSide 2.. In terms of biological role, part of the Sec protein translocase complex. Interacts with the SecYEG preprotein conducting channel. Has a central role in coupling the hydrolysis of ATP to the transfer of proteins into and across the cell membrane, serving as an ATP-driven molecular motor driving the stepwise translocation of polypeptide chains across the membrane. In Lactococcus lactis subsp. cremoris (strain SK11), this protein is Protein translocase subunit SecA.